The chain runs to 706 residues: Ribosomal RNA large subunit methyltransferase K/L (706 aa).

The region spanning Leu43–Leu154 is the THUMP domain.

The protein belongs to the methyltransferase superfamily. RlmKL family.

Its subcellular location is the cytoplasm. It carries out the reaction guanosine(2445) in 23S rRNA + S-adenosyl-L-methionine = N(2)-methylguanosine(2445) in 23S rRNA + S-adenosyl-L-homocysteine + H(+). It catalyses the reaction guanosine(2069) in 23S rRNA + S-adenosyl-L-methionine = N(2)-methylguanosine(2069) in 23S rRNA + S-adenosyl-L-homocysteine + H(+). In terms of biological role, specifically methylates the guanine in position 2445 (m2G2445) and the guanine in position 2069 (m7G2069) of 23S rRNA. This Yersinia pestis (strain Pestoides F) protein is Ribosomal RNA large subunit methyltransferase K/L.